The chain runs to 194 residues: Probable GTP-binding protein EngB (194 aa).

Residues 22-194 form the EngB-type G domain; it reads GKPEIALVGR…SVWEWITAHM (173 aa). GTP is bound by residues 30 to 37, 57 to 61, 75 to 78, 142 to 145, and 175 to 177; these read GRSNVGKS, GKTQT, DVPG, TKSD, and FSS. Mg(2+) contacts are provided by Ser37 and Thr59.

This sequence belongs to the TRAFAC class TrmE-Era-EngA-EngB-Septin-like GTPase superfamily. EngB GTPase family. It depends on Mg(2+) as a cofactor.

Functionally, necessary for normal cell division and for the maintenance of normal septation. The chain is Probable GTP-binding protein EngB from Leuconostoc citreum (strain KM20).